Here is a 131-residue protein sequence, read N- to C-terminus: MSGGKGGKVGSAAKASQTRSAKAGLTFPVGRVHRLLRRGNYAQRIGSGAPVYLTAVLEYLAAEILELAGNAARDNKKSRIIPRHLQLAIRNDDELNKLLGNVTIAQGGVLPNIHQNLLPKKSAKPSASQEL.

N-acetylserine is present on S2. 2 positions are modified to N6-acetyllysine: K5 and K8. Q106 bears the N5-methylglutamine mark. Position 128 is a phosphoserine (S128). The short motif at 128–129 (SQ) is the [ST]-Q motif element.

The protein belongs to the histone H2A family. As to quaternary structure, the nucleosome is a histone octamer containing two molecules each of H2A, H2B, H3 and H4 assembled in one H3-H4 heterotetramer and two H2A-H2B heterodimers. The octamer wraps approximately 147 bp of DNA. Post-translationally, phosphorylated to form H2AS128ph (gamma-H2A) in response to DNA double-strand breaks (DSBs) generated by exogenous genotoxic agents and by stalled replication forks. Phosphorylation is dependent on the DNA damage checkpoint kinases MEC1/ATR and TEL1/ATM, spreads on either side of a detected DSB site and may mark the surrounding chromatin for recruitment of proteins required for DNA damage signaling and repair. Gamma-H2A is removed from the DNA prior to the strand invasion-primer extension step of the repair process and subsequently dephosphorylated by PPH3, a component of the histone H2A phosphatase complex (HTP-C). Dephosphorylation is necessary for efficient recovery from the DNA damage checkpoint. In terms of processing, acetylated by ESA1 to form H2AK4ac and H2AK7ac.

The protein localises to the nucleus. It is found in the chromosome. Its function is as follows. Core component of nucleosome which plays a central role in DNA double strand break (DSB) repair. Nucleosomes wrap and compact DNA into chromatin, limiting DNA accessibility to the cellular machineries which require DNA as a template. Histones thereby play a central role in transcription regulation, DNA repair, DNA replication and chromosomal stability. DNA accessibility is regulated via a complex set of post-translational modifications of histones, also called histone code, and nucleosome remodeling. In Candida glabrata (strain ATCC 2001 / BCRC 20586 / JCM 3761 / NBRC 0622 / NRRL Y-65 / CBS 138) (Yeast), this protein is Histone H2A.2 (HTA2).